A 648-amino-acid chain; its full sequence is Biosynthetic arginine decarboxylase (648 aa).

The residue at position 109 (Lys109) is an N6-(pyridoxal phosphate)lysine. Residue 291–301 (IDVGGGLGIDF) coordinates substrate.

The protein belongs to the Orn/Lys/Arg decarboxylase class-II family. SpeA subfamily. Requires Mg(2+) as cofactor. It depends on pyridoxal 5'-phosphate as a cofactor.

The enzyme catalyses L-arginine + H(+) = agmatine + CO2. Its pathway is amine and polyamine biosynthesis; agmatine biosynthesis; agmatine from L-arginine: step 1/1. Functionally, catalyzes the biosynthesis of agmatine from arginine. The protein is Biosynthetic arginine decarboxylase of Prochlorococcus marinus (strain MIT 9301).